Reading from the N-terminus, the 201-residue chain is Molybdenum cofactor guanylyltransferase (201 aa).

GTP-binding positions include 15 to 17 (LCG), K28, D74, and D104. D104 is a Mg(2+) binding site.

Belongs to the MobA family. Monomer. The cofactor is Mg(2+).

The protein resides in the cytoplasm. The catalysed reaction is Mo-molybdopterin + GTP + H(+) = Mo-molybdopterin guanine dinucleotide + diphosphate. Its function is as follows. Transfers a GMP moiety from GTP to Mo-molybdopterin (Mo-MPT) cofactor (Moco or molybdenum cofactor) to form Mo-molybdopterin guanine dinucleotide (Mo-MGD) cofactor. The polypeptide is Molybdenum cofactor guanylyltransferase (Ectopseudomonas mendocina (strain ymp) (Pseudomonas mendocina)).